The chain runs to 156 residues: Small ribosomal subunit protein uS7 (156 aa).

It belongs to the universal ribosomal protein uS7 family. As to quaternary structure, part of the 30S ribosomal subunit. Contacts proteins S9 and S11.

Its function is as follows. One of the primary rRNA binding proteins, it binds directly to 16S rRNA where it nucleates assembly of the head domain of the 30S subunit. Is located at the subunit interface close to the decoding center, probably blocks exit of the E-site tRNA. The protein is Small ribosomal subunit protein uS7 of Beutenbergia cavernae (strain ATCC BAA-8 / DSM 12333 / CCUG 43141 / JCM 11478 / NBRC 16432 / NCIMB 13614 / HKI 0122).